Here is a 317-residue protein sequence, read N- to C-terminus: Ribosomal protein L11 methyltransferase (317 aa).

T139, G162, D184, and N226 together coordinate S-adenosyl-L-methionine. The disordered stretch occupies residues E274–G297.

It belongs to the methyltransferase superfamily. PrmA family.

The protein localises to the cytoplasm. The enzyme catalyses L-lysyl-[protein] + 3 S-adenosyl-L-methionine = N(6),N(6),N(6)-trimethyl-L-lysyl-[protein] + 3 S-adenosyl-L-homocysteine + 3 H(+). Functionally, methylates ribosomal protein L11. The protein is Ribosomal protein L11 methyltransferase of Sorangium cellulosum (strain So ce56) (Polyangium cellulosum (strain So ce56)).